The primary structure comprises 170 residues: dCTP pyrophosphatase 1 (170 aa).

Residues 1-25 (MSQAGTGVCGNGGQEDSAAAGPFSF) form a disordered region. Serine 2 carries the post-translational modification N-acetylserine. Serine 2 carries the phosphoserine modification. Residues histidine 38 and 47–51 (WEQFH) contribute to the substrate site. 2 residues coordinate Mg(2+): glutamate 63 and glutamate 66. A substrate-binding site is contributed by tryptophan 73. Residues glutamate 95 and aspartate 98 each coordinate Mg(2+). A substrate-binding site is contributed by tyrosine 102. The interval 149 to 170 (LSENEAVGSGDPASELGNQAST) is disordered.

Homotetramer. Mg(2+) is required as a cofactor.

It is found in the cytoplasm. The protein resides in the cytosol. It catalyses the reaction dCTP + H2O = dCMP + diphosphate + H(+). Its function is as follows. Hydrolyzes deoxynucleoside triphosphates (dNTPs) to the corresponding nucleoside monophosphates. Has a strong preference for dCTP and its analogs including 5-iodo-dCTP and 5-methyl-dCTP for which it may even have a higher efficiency. May protect DNA or RNA against the incorporation of these genotoxic nucleotide analogs through their catabolism. The protein is dCTP pyrophosphatase 1 of Rattus norvegicus (Rat).